A 182-amino-acid polypeptide reads, in one-letter code: Protein Syd (182 aa).

This sequence belongs to the Syd family.

It is found in the cell inner membrane. Functionally, interacts with the SecY protein in vivo. May bind preferentially to an uncomplexed state of SecY, thus functioning either as a chelating agent for excess SecY in the cell or as a regulatory factor that negatively controls the translocase function. This is Protein Syd from Pectobacterium carotovorum subsp. carotovorum (strain PC1).